The chain runs to 346 residues: Tetraacyldisaccharide 4'-kinase (346 aa).

Position 54-61 (54-61 (TVGGAGKT)) interacts with ATP.

The protein belongs to the LpxK family.

The enzyme catalyses a lipid A disaccharide + ATP = a lipid IVA + ADP + H(+). Its pathway is glycolipid biosynthesis; lipid IV(A) biosynthesis; lipid IV(A) from (3R)-3-hydroxytetradecanoyl-[acyl-carrier-protein] and UDP-N-acetyl-alpha-D-glucosamine: step 6/6. Its function is as follows. Transfers the gamma-phosphate of ATP to the 4'-position of a tetraacyldisaccharide 1-phosphate intermediate (termed DS-1-P) to form tetraacyldisaccharide 1,4'-bis-phosphate (lipid IVA). The sequence is that of Tetraacyldisaccharide 4'-kinase from Rhizobium meliloti (strain 1021) (Ensifer meliloti).